The primary structure comprises 614 residues: Afadin- and alpha-actinin-binding protein (614 aa).

Coiled coils occupy residues 131-227 (MDHL…IAMD) and 266-293 (RQKQILMENAELKKVLQQMKKEMISLLS). Phosphoserine occurs at positions 290, 293, and 312. The disordered stretch occupies residues 292 to 317 (LSPQKKKPRERVDDSTGTVISDVEED). The stretch at 374 to 460 (ISRQDHEQET…RSFTEAAIRL (87 aa)) forms a coiled coil. Serine 536, serine 540, and serine 542 each carry phosphoserine.

It belongs to the ADIP family. As to quaternary structure, interacts with afadin and alpha-actinin. Interacts with VAV2. Interacts with SSX2 and SSX3. Does not interact with SSX1 and SSX4. Interacts with PCM1. Interacts with WRAP73. As to expression, widely expressed, with the highest expression in brain, intermediate expression in kidney, testis, spinal cord, liver, heart, lung, skeletal muscle, ovary, fetal liver and fetal brain, and little to no expression in pancreas and spleen. All specific brain regions showed intermediate to high expression, with highest expression in amygdala. Also expressed in fetal tissues, mainly in liver and brain.

Its subcellular location is the cell junction. The protein localises to the adherens junction. It is found in the nucleus. The protein resides in the cytoplasm. It localises to the cytoskeleton. Its subcellular location is the microtubule organizing center. The protein localises to the centrosome. It is found in the centriolar satellite. The protein resides in the cilium basal body. Belongs to an adhesion system, which plays a role in the organization of homotypic, interneuronal and heterotypic cell-cell adherens junctions (AJs). May connect the nectin-afadin and E-cadherin-catenin system through alpha-actinin and may be involved in organization of the actin cytoskeleton at AJs through afadin and alpha-actinin. Involved in cell movement: localizes at the leading edge of moving cells in response to PDGF and is required for the formation of the leading edge and the promotion of cell movement, possibly via activation of Rac signaling. Acts as a centrosome maturation factor, probably by maintaining the integrity of the pericentriolar material and proper microtubule nucleation at mitotic spindle poles. The function seems to implicate at least in part WRAP73; the SSX2IP:WRAP73 complex is proposed to act as regulator of spindle anchoring at the mitotic centrosome. Involved in ciliogenesis. It is required for targeted recruitment of the BBSome, CEP290, RAB8, and SSTR3 to the cilia. This chain is Afadin- and alpha-actinin-binding protein (SSX2IP), found in Homo sapiens (Human).